Reading from the N-terminus, the 339-residue chain is DNA-directed RNA polymerase subunit alpha (339 aa).

The interval 1–235 (MTIQKNWQEL…DQLNVFVNFE (235 aa)) is alpha N-terminal domain (alpha-NTD). The tract at residues 251 to 339 (FNPAFLKKVD…ELAKRFEDHY (89 aa)) is alpha C-terminal domain (alpha-CTD).

Belongs to the RNA polymerase alpha chain family. In terms of assembly, homodimer. The RNAP catalytic core consists of 2 alpha, 1 beta, 1 beta' and 1 omega subunit. When a sigma factor is associated with the core the holoenzyme is formed, which can initiate transcription.

It catalyses the reaction RNA(n) + a ribonucleoside 5'-triphosphate = RNA(n+1) + diphosphate. Functionally, DNA-dependent RNA polymerase catalyzes the transcription of DNA into RNA using the four ribonucleoside triphosphates as substrates. The protein is DNA-directed RNA polymerase subunit alpha of Nitrobacter winogradskyi (strain ATCC 25391 / DSM 10237 / CIP 104748 / NCIMB 11846 / Nb-255).